Reading from the N-terminus, the 465-residue chain is MPRLQCLTMATSLILLLQALSLVSSTILSRADRITRLPGQPRVGFQQYSGYVTIDEKKQRALFYYLAEAETKPISKPLVLWLNGGPGCSSLGVGAFSENGPFRPKGSILVRNQHSWNQEANMLYLETPVGVGFSYANESSSYEGVNDKITAKDNLVFLQKWFLKFPQYLNRSLFITGESYAGHYVPQLAQLMIQYNKKHNLFNLKGIAIGNPVMEFATDFNSRAEYFWSHGLISDPTYKLFTSSCNYSRFLSEYHRGSVSSMCTKVLSQVGIETSRFIDKYDVTLDVCIPSVLSQSKVVSPQPQQVGETVDVCLEDETVNYLNRRDVQKALHARLVGTRKWTVCSDVLDYEVLDVEVPTINIVGSLVKAGVPVFVYSGDQDSVIPLTGSRTLVKRLAEELGLRTTVPYRVWFAGQQVGGWTQVYGNTLAFATVRGAAHEVPFSQPARALVLFKAFLGGRPLPEEF.

An N-terminal signal peptide occupies residues 1 to 25 (MPRLQCLTMATSLILLLQALSLVSS). Intrachain disulfides connect Cys88/Cys344, Cys245/Cys263, and Cys288/Cys313. Asn137 and Asn170 each carry an N-linked (GlcNAc...) asparagine glycan. Ser179 is a catalytic residue. Residue Asn246 is glycosylated (N-linked (GlcNAc...) asparagine). Residues Asp381 and His438 contribute to the active site.

The protein belongs to the peptidase S10 family. As to expression, ubiquitous.

It is found in the secreted. Its function is as follows. Probable carboxypeptidase. The sequence is that of Serine carboxypeptidase-like 46 (SCPL46) from Arabidopsis thaliana (Mouse-ear cress).